The primary structure comprises 341 residues: DNA fragmentation factor subunit beta (341 aa).

The region spanning Lys7–Gly83 is the CIDE-N domain.

Heterodimer of DFFA and DFFB. Interacts with H1-1.

The protein resides in the cytoplasm. The protein localises to the nucleus. Its activity is regulated as follows. Inhibited by DFFA (DFF45). Interacts with HIST1H1A. Its function is as follows. Nuclease that induces DNA fragmentation and chromatin condensation during apoptosis. Degrades naked DNA and induces apoptotic morphology. The chain is DNA fragmentation factor subunit beta (DFFB) from Bos taurus (Bovine).